The sequence spans 234 residues: uncharacterized protein (234 aa).

Residues 212–234 (GKHLKLDSNTTENKTTKQNETGG) form a disordered region. A compositionally biased stretch (low complexity) spans 220-234 (NTTENKTTKQNETGG).

This is an uncharacterized protein from Methanothermobacter thermautotrophicus (Methanobacterium thermoformicicum).